A 1052-amino-acid polypeptide reads, in one-letter code: Kinesin-like protein KIF11 (1052 aa).

The region spanning 17–358 is the Kinesin motor domain; that stretch reads NIQVVVRCRP…LEYAHRAKNI (342 aa). Position 104-111 (104-111) interacts with ATP; that stretch reads GQTGTGKT. K145 is modified (N6-acetyllysine). Residues 364-478 are a coiled coil; sequence VNQKLTKKAL…ETKLQLVKEE (115 aa). At T457 the chain carries Phosphothreonine. K476 participates in a covalent cross-link: Glycyl lysine isopeptide (Lys-Gly) (interchain with G-Cter in SUMO2). T925 carries the phosphothreonine modification. Disordered stretches follow at residues 950–1026 and 1033–1052; these read LQKK…LNPV and EASDLSISKSRLPLHTSINL. A coiled-coil region spans residues 963-988; it reads EASKETSQDMDEEREALEQCTEELVS. A compositionally biased stretch (basic and acidic residues) spans 1016–1026; the sequence is KDKENRGLNPV.

Belongs to the TRAFAC class myosin-kinesin ATPase superfamily. Kinesin family. BimC subfamily. In terms of assembly, interacts with the thyroid hormone receptor in the presence of thyroid hormone. Component of a large chromatin remodeling complex, at least composed of MYSM1, PCAF, RBM10 and KIF11/TRIP5. Interacts with RARRES1 and AGBL2. Phosphorylated exclusively on serine during S phase, but on both serine and Thr-925 during mitosis, so controlling the association of KIF11 with the spindle apparatus (probably during early prophase).

The protein resides in the cytoplasm. The protein localises to the cytoskeleton. It localises to the spindle pole. Functionally, motor protein required for establishing a bipolar spindle during mitosis. Required in non-mitotic cells for transport of secretory proteins from the Golgi complex to the cell surface. This chain is Kinesin-like protein KIF11 (Kif11), found in Mus musculus (Mouse).